The chain runs to 752 residues: Zinc finger protein 425 (752 aa).

The 72-residue stretch at V9–R80 folds into the KRAB domain. 19 consecutive C2H2-type zinc fingers follow at residues Y190–H212, F246–H268, Y274–H296, F302–H324, F330–H352, F358–H380, F386–H408, F414–H436, F442–H464, F470–H492, F498–H520, F526–H548, F554–H576, F582–H604, Y610–H632, F638–H660, F666–H688, F694–H716, and F722–H744.

It belongs to the krueppel C2H2-type zinc-finger protein family.

It localises to the nucleus. It is found in the cytoplasm. Functionally, acts as a transcriptional repressor. This is Zinc finger protein 425 (ZNF425) from Homo sapiens (Human).